A 438-amino-acid chain; its full sequence is Adenylosuccinate synthetase (438 aa).

GTP is bound by residues 13–19 and 41–43; these read GDEGKGK and GHT. D14 functions as the Proton acceptor in the catalytic mechanism. Mg(2+)-binding residues include D14 and G41. IMP is bound by residues 14-17, 39-42, T130, R144, Q225, T240, and R312; these read DEGK and NAGH. H42 serves as the catalytic Proton donor. Residue 308–314 participates in substrate binding; the sequence is ATTGRQR. GTP is bound by residues R314, 340–342, and 422–424; these read KLD and STG.

It belongs to the adenylosuccinate synthetase family. As to quaternary structure, homodimer. It depends on Mg(2+) as a cofactor.

It is found in the cytoplasm. The enzyme catalyses IMP + L-aspartate + GTP = N(6)-(1,2-dicarboxyethyl)-AMP + GDP + phosphate + 2 H(+). Its pathway is purine metabolism; AMP biosynthesis via de novo pathway; AMP from IMP: step 1/2. Plays an important role in the de novo pathway of purine nucleotide biosynthesis. Catalyzes the first committed step in the biosynthesis of AMP from IMP. The protein is Adenylosuccinate synthetase of Vesicomyosocius okutanii subsp. Calyptogena okutanii (strain HA).